Consider the following 113-residue polypeptide: FK506-binding protein 1B (113 aa).

Positions 19 to 113 (GQTVVIEYTG…IFDVYLKGLQ (95 aa)) constitute a PPIase FKBP-type domain.

This sequence belongs to the FKBP-type PPIase family. FKBP1 subfamily.

It is found in the cytoplasm. It catalyses the reaction [protein]-peptidylproline (omega=180) = [protein]-peptidylproline (omega=0). Its activity is regulated as follows. Inhibited by both FK506 and rapamycin. Functionally, PPIases accelerate the folding of proteins. It catalyzes the cis-trans isomerization of proline imidic peptide bonds in oligopeptides. In Neurospora crassa (strain ATCC 24698 / 74-OR23-1A / CBS 708.71 / DSM 1257 / FGSC 987), this protein is FK506-binding protein 1B (fkr-3).